We begin with the raw amino-acid sequence, 188 residues long: Putative manganese efflux pump MntP (188 aa).

A run of 6 helical transmembrane segments spans residues 3 to 23, 35 to 55, 63 to 83, 104 to 126, 140 to 160, and 167 to 187; these read FYAL…VALA, IAAT…AGWV, FISE…GLKM, WMTV…GLAF, MATT…GVLF, and AGGL…LGLI.

It belongs to the MntP (TC 9.B.29) family.

The protein resides in the cell inner membrane. Probably functions as a manganese efflux pump. The sequence is that of Putative manganese efflux pump MntP from Neisseria meningitidis serogroup B (strain ATCC BAA-335 / MC58).